A 520-amino-acid chain; its full sequence is ATP synthase subunit alpha (520 aa).

169–176 contributes to the ATP binding site; it reads GDRKTGKT.

This sequence belongs to the ATPase alpha/beta chains family. F-type ATPases have 2 components, CF(1) - the catalytic core - and CF(0) - the membrane proton channel. CF(1) has five subunits: alpha(3), beta(3), gamma(1), delta(1), epsilon(1). CF(0) has three main subunits: a(1), b(2) and c(9-12). The alpha and beta chains form an alternating ring which encloses part of the gamma chain. CF(1) is attached to CF(0) by a central stalk formed by the gamma and epsilon chains, while a peripheral stalk is formed by the delta and b chains.

Its subcellular location is the cell membrane. It catalyses the reaction ATP + H2O + 4 H(+)(in) = ADP + phosphate + 5 H(+)(out). Its function is as follows. Produces ATP from ADP in the presence of a proton gradient across the membrane. The alpha chain is a regulatory subunit. The polypeptide is ATP synthase subunit alpha (Oenococcus oeni (strain ATCC BAA-331 / PSU-1)).